A 322-amino-acid chain; its full sequence is 4-diphosphocytidyl-2-C-methyl-D-erythritol kinase (322 aa).

K25 is an active-site residue. 110–120 (PVAGGMAGGSA) contacts ATP. D152 is a catalytic residue.

Belongs to the GHMP kinase family. IspE subfamily.

The catalysed reaction is 4-CDP-2-C-methyl-D-erythritol + ATP = 4-CDP-2-C-methyl-D-erythritol 2-phosphate + ADP + H(+). Its pathway is isoprenoid biosynthesis; isopentenyl diphosphate biosynthesis via DXP pathway; isopentenyl diphosphate from 1-deoxy-D-xylulose 5-phosphate: step 3/6. Its function is as follows. Catalyzes the phosphorylation of the position 2 hydroxy group of 4-diphosphocytidyl-2C-methyl-D-erythritol. This Mycolicibacterium vanbaalenii (strain DSM 7251 / JCM 13017 / BCRC 16820 / KCTC 9966 / NRRL B-24157 / PYR-1) (Mycobacterium vanbaalenii) protein is 4-diphosphocytidyl-2-C-methyl-D-erythritol kinase.